Here is a 185-residue protein sequence, read N- to C-terminus: Lactoylglutathione lyase (185 aa).

The interval 1 to 21 (MASEAKESPANNPGLSTVRDE) is disordered. Residues 27 to 174 (IMQQTMFRVK…DGYWIEIFDL (148 aa)) form the VOC domain. 2 residues coordinate substrate: glutamine 30 and arginine 34. Residue glutamine 30 coordinates Zn(2+). Glutamate 96 lines the Zn(2+) pocket. Substrate contacts are provided by residues asparagine 100, arginine 120, histidine 124, and 154-155 (KM). A Zn(2+)-binding site is contributed by histidine 124. Position 170 (glutamate 170) interacts with Zn(2+). Glutamate 170 acts as the Proton donor/acceptor in catalysis.

This sequence belongs to the glyoxalase I family. The cofactor is Zn(2+).

The enzyme catalyses (R)-S-lactoylglutathione = methylglyoxal + glutathione. The protein operates within secondary metabolite metabolism; methylglyoxal degradation; (R)-lactate from methylglyoxal: step 1/2. Its function is as follows. Catalyzes the conversion of hemimercaptal, formed from methylglyoxal and glutathione, to S-lactoylglutathione. The sequence is that of Lactoylglutathione lyase (GLY I) from Brassica juncea (Indian mustard).